Consider the following 39-residue polypeptide: Photosystem II reaction center protein J (39 aa).

The helical transmembrane segment at 7 to 27 threads the bilayer; that stretch reads IPLWLVATIGGIAVLTVLGLF.

It belongs to the PsbJ family. As to quaternary structure, PSII is composed of 1 copy each of membrane proteins PsbA, PsbB, PsbC, PsbD, PsbE, PsbF, PsbH, PsbI, PsbJ, PsbK, PsbL, PsbM, PsbT, PsbX, PsbY, PsbZ, Psb30/Ycf12, at least 3 peripheral proteins of the oxygen-evolving complex and a large number of cofactors. It forms dimeric complexes.

The protein localises to the plastid. It is found in the chloroplast thylakoid membrane. Its function is as follows. One of the components of the core complex of photosystem II (PSII). PSII is a light-driven water:plastoquinone oxidoreductase that uses light energy to abstract electrons from H(2)O, generating O(2) and a proton gradient subsequently used for ATP formation. It consists of a core antenna complex that captures photons, and an electron transfer chain that converts photonic excitation into a charge separation. This chain is Photosystem II reaction center protein J, found in Cyanidioschyzon merolae (strain NIES-3377 / 10D) (Unicellular red alga).